A 357-amino-acid chain; its full sequence is UDP-N-acetylglucosamine--N-acetylmuramyl-(pentapeptide) pyrophosphoryl-undecaprenol N-acetylglucosamine transferase (357 aa).

UDP-N-acetyl-alpha-D-glucosamine-binding positions include 7-9 (TGG), Asn119, Arg159, Ser187, Ile241, and Gln286.

The protein belongs to the glycosyltransferase 28 family. MurG subfamily.

It is found in the cell inner membrane. It catalyses the reaction di-trans,octa-cis-undecaprenyl diphospho-N-acetyl-alpha-D-muramoyl-L-alanyl-D-glutamyl-meso-2,6-diaminopimeloyl-D-alanyl-D-alanine + UDP-N-acetyl-alpha-D-glucosamine = di-trans,octa-cis-undecaprenyl diphospho-[N-acetyl-alpha-D-glucosaminyl-(1-&gt;4)]-N-acetyl-alpha-D-muramoyl-L-alanyl-D-glutamyl-meso-2,6-diaminopimeloyl-D-alanyl-D-alanine + UDP + H(+). The protein operates within cell wall biogenesis; peptidoglycan biosynthesis. Its function is as follows. Cell wall formation. Catalyzes the transfer of a GlcNAc subunit on undecaprenyl-pyrophosphoryl-MurNAc-pentapeptide (lipid intermediate I) to form undecaprenyl-pyrophosphoryl-MurNAc-(pentapeptide)GlcNAc (lipid intermediate II). The polypeptide is UDP-N-acetylglucosamine--N-acetylmuramyl-(pentapeptide) pyrophosphoryl-undecaprenol N-acetylglucosamine transferase (Nitrosomonas europaea (strain ATCC 19718 / CIP 103999 / KCTC 2705 / NBRC 14298)).